Reading from the N-terminus, the 147-residue chain is Large ribosomal subunit protein uL22c (147 aa).

This sequence belongs to the universal ribosomal protein uL22 family. In terms of assembly, part of the 50S ribosomal subunit.

The protein localises to the plastid. It is found in the chloroplast. In terms of biological role, this protein binds specifically to 23S rRNA. Functionally, the globular domain of the protein is located near the polypeptide exit tunnel on the outside of the subunit, while an extended beta-hairpin is found that lines the wall of the exit tunnel in the center of the 70S ribosome. The sequence is that of Large ribosomal subunit protein uL22c (rpl22) from Lolium perenne (Perennial ryegrass).